Consider the following 514-residue polypeptide: Carboxysome shell carbonic anhydrase (514 aa).

The segment at 1–27 (MAYRNRNLASQTQRPLAPTAPRRRPVV) is disordered. Cys-175 provides a ligand contact to Zn(2+). Asp-177 functions as the Proton acceptor in the catalytic mechanism. Zn(2+) contacts are provided by His-243 and Cys-254.

Belongs to the beta-class carbonic anhydrase family. CsoSCA subfamily. As to quaternary structure, homodimer. Requires Zn(2+) as cofactor.

The protein resides in the carboxysome. It catalyses the reaction hydrogencarbonate + H(+) = CO2 + H2O. Functionally, reversible hydration of carbon dioxide. Essential for photosynthetic carbon dioxide fixation, supplies CO(2) to RuBisCO (ribulose bisphosphate carboxylase, cbbL-cbbS) in the carboxysome. This chain is Carboxysome shell carbonic anhydrase, found in Prochlorococcus marinus (strain MIT 9313).